The chain runs to 213 residues: Adenylate kinase (213 aa).

Position 10-15 (10-15) interacts with ATP; it reads GSGKGS. The tract at residues 30 to 60 is NMP; that stretch reads STGNLFRAILKEDSELARKIKEINVSGGKLV. Residues T31, R36, 58–60, 87–90, and Q94 each bind AMP; these read KLV and GYPR. The segment at 123 to 160 is LID; sequence GRWMCPKCAGIYNIHFKKPQVHGLCDNDQATLYQRADD. R124 serves as a coordination point for ATP. The Zn(2+) site is built by C127 and C130. 133–134 is a binding site for ATP; it reads IY. Zn(2+) is bound by residues C147 and D150. The AMP site is built by R157 and R168. Position 196 (Q196) interacts with ATP.

This sequence belongs to the adenylate kinase family. As to quaternary structure, monomer.

The protein resides in the cytoplasm. The catalysed reaction is AMP + ATP = 2 ADP. It functions in the pathway purine metabolism; AMP biosynthesis via salvage pathway; AMP from ADP: step 1/1. Functionally, catalyzes the reversible transfer of the terminal phosphate group between ATP and AMP. Plays an important role in cellular energy homeostasis and in adenine nucleotide metabolism. This is Adenylate kinase from Ureaplasma parvum serovar 3 (strain ATCC 27815 / 27 / NCTC 11736).